The sequence spans 82 residues: Protein CYSTEINE-RICH TRANSMEMBRANE MODULE 13 (82 aa).

The segment at 1–58 (MYHQEQHPVGAPPPQGYPPKDGYPPAGYPPAGYPPPGYAQGYPAQGYPPPQYSQAPQQ) is disordered. A compositionally biased stretch (pro residues) spans 26-37 (AGYPPAGYPPPG). Residues 59–76 (KQNAGMLEGCLAALCCCC) form a helical membrane-spanning segment.

This sequence belongs to the CYSTM1 family. In terms of assembly, homodimer and heterodimers. Interacts with CYSTM7, CYTSM3, CYTSM4, CYTSM5, CYTSM6, CYTSM9, CYTSM10 and CYTSM11. Binds weakly to CYSTM1 and CYSTM2. In terms of tissue distribution, expressed in root meristem, root vasculature, leaf vasculature and floral organ primordia. Mostly expressed in roots and flowers and, to a lower extent, in stems, siliques and leaves.

It localises to the cell membrane. Its function is as follows. Required for the promotion of megasporogenesis, or promotion of germ cell formation from somatic precursor cells. Acts redundantly with WIH2. Functions in a genetic pathway downstream of SPL/NZZ and WUS and together with TRN2 in promoting megasporogenesis. Involved in resistance to abiotic stress. This Arabidopsis thaliana (Mouse-ear cress) protein is Protein CYSTEINE-RICH TRANSMEMBRANE MODULE 13.